We begin with the raw amino-acid sequence, 506 residues long: ATP synthase subunit alpha (506 aa).

The span at 119 to 129 (GPIEYEGKRPI) shows a compositional bias: basic and acidic residues. The segment at 119-138 (GPIEYEGKRPIESPAPPIVR) is disordered. An ATP-binding site is contributed by 169–176 (GDRQTGKT).

Belongs to the ATPase alpha/beta chains family. In terms of assembly, F-type ATPases have 2 components, CF(1) - the catalytic core - and CF(0) - the membrane proton channel. CF(1) has five subunits: alpha(3), beta(3), gamma(1), delta(1), epsilon(1). CF(0) has three main subunits: a(1), b(2) and c(9-12). The alpha and beta chains form an alternating ring which encloses part of the gamma chain. CF(1) is attached to CF(0) by a central stalk formed by the gamma and epsilon chains, while a peripheral stalk is formed by the delta and b chains.

It localises to the cell membrane. The catalysed reaction is ATP + H2O + 4 H(+)(in) = ADP + phosphate + 5 H(+)(out). Its function is as follows. Produces ATP from ADP in the presence of a proton gradient across the membrane. The alpha chain is a regulatory subunit. The sequence is that of ATP synthase subunit alpha from Caldanaerobacter subterraneus subsp. tengcongensis (strain DSM 15242 / JCM 11007 / NBRC 100824 / MB4) (Thermoanaerobacter tengcongensis).